The following is a 570-amino-acid chain: Proline--tRNA ligase (570 aa).

Belongs to the class-II aminoacyl-tRNA synthetase family. ProS type 1 subfamily. Homodimer.

The protein resides in the cytoplasm. The catalysed reaction is tRNA(Pro) + L-proline + ATP = L-prolyl-tRNA(Pro) + AMP + diphosphate. Its function is as follows. Catalyzes the attachment of proline to tRNA(Pro) in a two-step reaction: proline is first activated by ATP to form Pro-AMP and then transferred to the acceptor end of tRNA(Pro). As ProRS can inadvertently accommodate and process non-cognate amino acids such as alanine and cysteine, to avoid such errors it has two additional distinct editing activities against alanine. One activity is designated as 'pretransfer' editing and involves the tRNA(Pro)-independent hydrolysis of activated Ala-AMP. The other activity is designated 'posttransfer' editing and involves deacylation of mischarged Ala-tRNA(Pro). The misacylated Cys-tRNA(Pro) is not edited by ProRS. In Syntrophomonas wolfei subsp. wolfei (strain DSM 2245B / Goettingen), this protein is Proline--tRNA ligase.